We begin with the raw amino-acid sequence, 504 residues long: Bacterial leucyl aminopeptidase (504 aa).

Positions 1–21 (MKYTKTLLAMVLSATFCQAYA) are cleaved as a signal peptide. The propeptide occupies 22–106 (EDKVWISIGA…AMPTTLASFV (85 aa)). 4 residues coordinate Zn(2+): His-203, Asp-223, Glu-258, and Asp-285. An intrachain disulfide couples Cys-329 to Cys-333. His-362 lines the Zn(2+) pocket. Residues 406 to 504 (LEDGVPVTDL…SGASLKASTF (99 aa)) constitute a propeptide, removed in mature form.

The protein belongs to the peptidase M28 family. M28E subfamily. Requires Zn(2+) as cofactor.

Its subcellular location is the secreted. It catalyses the reaction Release of an N-terminal amino acid, preferentially leucine, but not glutamic or aspartic acids.. This is Bacterial leucyl aminopeptidase from Vibrio proteolyticus (Aeromonas proteolytica).